A 303-amino-acid chain; its full sequence is UDP-3-O-acyl-N-acetylglucosamine deacetylase (303 aa).

His-78, His-237, and Asp-241 together coordinate Zn(2+). His-264 serves as the catalytic Proton donor.

It belongs to the LpxC family. Zn(2+) is required as a cofactor.

The catalysed reaction is a UDP-3-O-[(3R)-3-hydroxyacyl]-N-acetyl-alpha-D-glucosamine + H2O = a UDP-3-O-[(3R)-3-hydroxyacyl]-alpha-D-glucosamine + acetate. It participates in glycolipid biosynthesis; lipid IV(A) biosynthesis; lipid IV(A) from (3R)-3-hydroxytetradecanoyl-[acyl-carrier-protein] and UDP-N-acetyl-alpha-D-glucosamine: step 2/6. Functionally, catalyzes the hydrolysis of UDP-3-O-myristoyl-N-acetylglucosamine to form UDP-3-O-myristoylglucosamine and acetate, the committed step in lipid A biosynthesis. This is UDP-3-O-acyl-N-acetylglucosamine deacetylase from Saccharophagus degradans (strain 2-40 / ATCC 43961 / DSM 17024).